The following is a 258-amino-acid chain: Acyl-[acyl-carrier-protein]--UDP-N-acetylglucosamine O-acyltransferase (258 aa).

This sequence belongs to the transferase hexapeptide repeat family. LpxA subfamily. In terms of assembly, homotrimer.

It localises to the cytoplasm. The catalysed reaction is a (3R)-hydroxyacyl-[ACP] + UDP-N-acetyl-alpha-D-glucosamine = a UDP-3-O-[(3R)-3-hydroxyacyl]-N-acetyl-alpha-D-glucosamine + holo-[ACP]. Its pathway is glycolipid biosynthesis; lipid IV(A) biosynthesis; lipid IV(A) from (3R)-3-hydroxytetradecanoyl-[acyl-carrier-protein] and UDP-N-acetyl-alpha-D-glucosamine: step 1/6. In terms of biological role, involved in the biosynthesis of lipid A, a phosphorylated glycolipid that anchors the lipopolysaccharide to the outer membrane of the cell. The protein is Acyl-[acyl-carrier-protein]--UDP-N-acetylglucosamine O-acyltransferase of Pseudomonas fluorescens (strain Pf0-1).